A 236-amino-acid chain; its full sequence is Small ribosomal subunit protein uS3 (236 aa).

The KH type-2 domain maps to 39–107 (IRKFLKKELY…EISINIKEVK (69 aa)). Residues 213-229 (QPEKKEEAPARDKEGRG) show a composition bias toward basic and acidic residues. Residues 213 to 236 (QPEKKEEAPARDKEGRGTRRRGRQ) are disordered.

This sequence belongs to the universal ribosomal protein uS3 family. As to quaternary structure, part of the 30S ribosomal subunit. Forms a tight complex with proteins S10 and S14.

Binds the lower part of the 30S subunit head. Binds mRNA in the 70S ribosome, positioning it for translation. The protein is Small ribosomal subunit protein uS3 of Wolinella succinogenes (strain ATCC 29543 / DSM 1740 / CCUG 13145 / JCM 31913 / LMG 7466 / NCTC 11488 / FDC 602W) (Vibrio succinogenes).